Reading from the N-terminus, the 305-residue chain is MGCKTSKMCCPQLRKKKRQKAHQGGLTSQELNDLNAKTQGPNEVLQKIKEYEQEIRDLLQKHQEEKTALADAHKADVEARTLELQAQAQKDRDAETAKLLSEQAATMKAEMEEKFAELQKSFEQEKVSLTQTHQQFTDALQETVDELNSQLASFREKMKRVEESVLRQDYRRHIQDHGSPGQFWEQELQSLHFVIEMKSELIREQDKRLRNHESTMERNLVLEERSRTLQQENEALKVQTQKQGAVTVRLSEELLSTQVSLEKQIHRCEQLQREKEQNLYRAVNGDAPQQFSLQSNAQELPVMVL.

The N-myristoyl glycine moiety is linked to residue glycine 2. The tract at residues leucine 13–threonine 38 is disordered. A compositionally biased stretch (polar residues) spans glycine 25–threonine 38. Positions asparagine 42–arginine 281 form a coiled coil.

The protein belongs to the CCDC69 family.

It localises to the cytoplasm. The protein resides in the cytoskeleton. Its subcellular location is the spindle. The protein localises to the midbody. Its function is as follows. May act as a scaffold to regulate the recruitment and assembly of spindle midzone components. This Xenopus laevis (African clawed frog) protein is Coiled-coil domain-containing protein 69-A (ccdc69-a).